The primary structure comprises 239 residues: MKTMVAMLLAAVGVAVSASSTLAVNFCQSNKDRNCFTGSFGLVDIPGDASHKLLKADFGYVDLNGVGWQTNKETKTDGASIPPLLQPFVGSPWEDGYIRAAVIHDWYCDRHVRTWKETHRVFYDTMLASGLEKPKAKLLFYAVYAFGPRWGYLVPGEKCAAGKNCIQMTGKDAAFVQLPGELADQSSAGELKAIKATIDLKERSGDALTLDELMAIADEAHPKQTLRDQRPAGGDEITK.

The signal sequence occupies residues 1–23 (MKTMVAMLLAAVGVAVSASSTLA). Basic and acidic residues predominate over residues 220–230 (AHPKQTLRDQR). Residues 220–239 (AHPKQTLRDQRPAGGDEITK) form a disordered region.

This is an uncharacterized protein from Sinorhizobium fredii (strain NBRC 101917 / NGR234).